The sequence spans 378 residues: Long-chain-fatty-acid--luciferin-component ligase (378 aa).

This sequence belongs to the LuxE family.

The catalysed reaction is a long-chain fatty acid + L-cysteinyl-[protein] + ATP = an S-(long-chain fatty acyl)-L-cysteinyl-[protein] + AMP + diphosphate. The protein operates within lipid metabolism; fatty acid reduction for biolumincescence. Functionally, acyl-protein synthetase activates tetradecanoic acid. It is a component of the fatty acid reductase complex responsible for converting tetradecanoic acid to the aldehyde which serves as substrate in the luciferase-catalyzed reaction. This chain is Long-chain-fatty-acid--luciferin-component ligase, found in Aliivibrio fischeri (Vibrio fischeri).